A 573-amino-acid chain; its full sequence is Vacuolar protein 8 (573 aa).

The interval 1 to 36 (MAASAADRMGRQRMSGLSCSAPPRPTVVTNPGNKQD) is disordered. The span at 27 to 36 (VVTNPGNKQD) shows a compositional bias: polar residues. ARM repeat units follow at residues 60–97 (NRGEVDFFSNGPLRALSTLVYSDNIDLQRSAALAFAEI), 98–137 (TEKDIRPVNRDCLEPVLLLLQNTDPDIQRAASAALGNLAV), 139–178 (NENKVLIVEMGGFEPLIRQMMSPNVEVQCNAVGCITNLAT), 180–219 (EANKSKIARSGALLPLTKLAKSKDMRVQRNATGALLNMTH), 221–260 (DQNRQELVNAGAIPILVSLLSSRDPDVQYYSTTALSNIAV), 264–303 (NRKKLSSSEPRLVEHLIKLMDSGSPRVQCQAALALRNLAS), 305–344 (SDYQLEIVKANGLPHLFNLFQSTHTPLVLAAVACIRNISI), 346–386 (PLNE…NLAA), and 430–469 (DELKGTLLELGIAEVLIPLTLSDNIEVQGNSAAALGNLSS).

This sequence belongs to the beta-catenin family.

It localises to the vacuole membrane. Functionally, functions in both vacuole inheritance and protein targeting from the cytoplasm to vacuole. The protein is Vacuolar protein 8 (VAC8) of Yarrowia lipolytica (strain CLIB 122 / E 150) (Yeast).